The following is a 216-amino-acid chain: Large ribosomal subunit protein bL25 (216 aa).

Disordered regions lie at residues 1–21 (MAET…GAVR) and 192–216 (SADN…GKED). The segment covering 195–216 (NEAKTEEAGEDKSEEKSSGKED) has biased composition (basic and acidic residues).

Belongs to the bacterial ribosomal protein bL25 family. CTC subfamily. As to quaternary structure, part of the 50S ribosomal subunit; part of the 5S rRNA/L5/L18/L25 subcomplex. Contacts the 5S rRNA. Binds to the 5S rRNA independently of L5 and L18.

In terms of biological role, this is one of the proteins that binds to the 5S RNA in the ribosome where it forms part of the central protuberance. In Parvibaculum lavamentivorans (strain DS-1 / DSM 13023 / NCIMB 13966), this protein is Large ribosomal subunit protein bL25.